Reading from the N-terminus, the 70-residue chain is Sec-independent protein translocase protein TatA (70 aa).

Residues 1 to 21 form a helical membrane-spanning segment; sequence MFGLGGQELLLILLIILLLFG. The interval 47-70 is disordered; the sequence is EDEFNKAMSDPPEKKEKESPSDKG. Basic and acidic residues predominate over residues 57-70; sequence PPEKKEKESPSDKG.

This sequence belongs to the TatA/E family. In terms of assembly, forms a complex with TatC.

The protein resides in the cell inner membrane. Part of the twin-arginine translocation (Tat) system that transports large folded proteins containing a characteristic twin-arginine motif in their signal peptide across membranes. TatA could form the protein-conducting channel of the Tat system. This is Sec-independent protein translocase protein TatA from Prosthecochloris aestuarii (strain DSM 271 / SK 413).